Reading from the N-terminus, the 100-residue chain is UPF0213 protein YhbQ (100 aa).

In terms of domain architecture, GIY-YIG spans 2–77 (TPWFLYLIRT…KQLTKRQKER (76 aa)).

The protein belongs to the UPF0213 family.

The sequence is that of UPF0213 protein YhbQ from Escherichia coli O157:H7.